A 321-amino-acid polypeptide reads, in one-letter code: Endoglucanase 1 (321 aa).

The first 27 residues, 1-27 (MSRKLRTLMAALCALPLAFAAAPPAHA), serve as a signal peptide directing secretion. Asp110 is a catalytic residue. A disulfide bridge connects residues Cys112 and Cys156. The active-site Proton donor is Asp149. Asp295 acts as the Nucleophile in catalysis.

This sequence belongs to the glycosyl hydrolase 6 (cellulase B) family.

The enzyme catalyses Endohydrolysis of (1-&gt;4)-beta-D-glucosidic linkages in cellulose, lichenin and cereal beta-D-glucans.. In terms of biological role, implicated in the mechanism of induction exerted by cellobiose. The protein is Endoglucanase 1 (celA1) of Streptomyces halstedii.